The primary structure comprises 316 residues: Melanocyte-stimulating hormone receptor (316 aa).

Residues 1-37 lie on the Extracellular side of the membrane; the sequence is MPMQGAHRKLLGSLNSTPTATSNLGLAANHTGAPCLE. An N-linked (GlcNAc...) asparagine glycan is attached at asparagine 29. The helical transmembrane segment at 38 to 63 threads the bilayer; it reads VSIPDGLFLSLGLVSLVENVLVVAAI. Residues 64–72 are Cytoplasmic-facing; that stretch reads AKNRNLHSS. Residues 73 to 93 form a helical membrane-spanning segment; sequence MYCFICCLALSDLLVSGSNML. The Extracellular segment spans residues 94–118; the sequence is ETAVILLLEAGALATRTSVVQQLHN. Residues 119–140 traverse the membrane as a helical segment; sequence TIDVLTCSSMLCSLCFLGAIAV. The Cytoplasmic portion of the chain corresponds to 141 to 163; sequence DRYISIFYALRYHSIMTLPRAQR. A helical membrane pass occupies residues 164–183; the sequence is AIAAIWVASVLSSTLFITYY. Residues 184–191 are Extracellular-facing; sequence DHAAVLLC. A helical membrane pass occupies residues 192 to 211; it reads LVVFFLAMLVLMAVLYVHML. At 212–240 the chain is on the cytoplasmic side; sequence ARACQHAHGIIRLHKRQSPAHQGFGLRGA. Residues 241 to 266 form a helical membrane-spanning segment; sequence ATLTILLGIFFLCWGPFFLHLTLVVF. Residues 267-279 lie on the Extracellular side of the membrane; sequence CPQHLTCSCIFKN. Residues 280 to 300 form a helical membrane-spanning segment; that stretch reads FKVFLTLIICNTIIDPLIYAF. Residues 301-316 are Cytoplasmic-facing; that stretch reads RSQELRRTLKEVLCSW. Cysteine 314 is lipidated: S-palmitoyl cysteine.

Belongs to the G-protein coupled receptor 1 family. As to quaternary structure, interacts with MGRN1, but does not undergo MGRN1-mediated ubiquitination; this interaction competes with GNAS-binding and thus inhibits agonist-induced cAMP production. Interacts with OPN3; the interaction results in a decrease in MC1R-mediated cAMP signaling and ultimately a decrease in melanin production in melanocytes.

The protein resides in the cell membrane. Its function is as follows. Receptor for MSH (alpha, beta and gamma) and ACTH. The activity of this receptor is mediated by G proteins which activate adenylate cyclase. Mediates melanogenesis, the production of eumelanin (black/brown) and phaeomelanin (red/yellow), via regulation of cAMP signaling in melanocytes. This is Melanocyte-stimulating hormone receptor (MC1R) from Leontocebus fuscicollis (Brown-mantled tamarin).